Reading from the N-terminus, the 152-residue chain is Transcriptional regulator MraZ (152 aa).

2 consecutive SpoVT-AbrB domains span residues 5–52 (ASAI…PLKE) and 81–124 (ATEC…SDAE).

Belongs to the MraZ family. As to quaternary structure, forms oligomers.

The protein resides in the cytoplasm. Its subcellular location is the nucleoid. This is Transcriptional regulator MraZ from Pasteurella multocida (strain Pm70).